Reading from the N-terminus, the 292-residue chain is Syntaxin-19 (292 aa).

A t-SNARE coiled-coil homology domain is found at 207–269; sequence LSEIEQRHKE…NNTKEKFGLA (63 aa).

It belongs to the syntaxin family. As to quaternary structure, interacts with EGFR. In terms of tissue distribution, expressed in stomach, lung and skin (at protein level). In stomach, strongly expressed in the mucosa of the fundus, in epithelial cells of gastric pits, and in gastric glands (at protein level). In skin, expressed in the epidermis, dermis, and epithelial layer of the hair bulb (at protein level).

The protein resides in the cell membrane. It is found in the cytoplasm. Functionally, plays a role in endosomal trafficking of the epidermal growth factor receptor (EGFR). The polypeptide is Syntaxin-19 (Mus musculus (Mouse)).